The primary structure comprises 1312 residues: Beta-N-acetylhexosaminidase (1312 aa).

A signal peptide spans 1-33; sequence MKHEKQQRFSIRKYAVGAASVLIGFAFQAQTVA. Over residues 38–59 the composition is skewed to polar residues; the sequence is TPTTTENQPTIHTVSDSPQSSE. A disordered region spans residues 38 to 178; it reads TPTTTENQPT…ATEAGKERAA (141 aa). The span at 118-177 shows a compositional bias: basic and acidic residues; it reads AEKETANKKAEEASPKKEEAKEVDSKESNTDKTDKDKPAKKDEAKAEADKPATEAGKERA. Catalytic domain stretches follow at residues 176-616 and 621-1046; these read RAAT…TPEA and EAKR…PAVT. 2 G5 domains span residues 1059–1138 and 1150–1230; these read NVET…GAPV and TTEV…GTMV. Positions 1244-1290 are disordered; sequence EEKPKLEIPSQPAPSTAPAEESKVLPQDPAPVVTEKKLPETGTHDSA. Residues 1277-1286 are compositionally biased toward basic and acidic residues; the sequence is TEKKLPETGT. The LPXTG sorting signal motif lies at 1281-1285; it reads LPETG. The residue at position 1284 (T1284) is a Pentaglycyl murein peptidoglycan amidated threonine. Residues 1285-1312 constitute a propeptide, removed by sortase; sequence GTHDSAGLVVAGLMSTLAAYGLTKRKED.

This sequence belongs to the glycosyl hydrolase 20 family.

It localises to the secreted. Its subcellular location is the cell wall. The catalysed reaction is Hydrolysis of terminal non-reducing N-acetyl-D-hexosamine residues in N-acetyl-beta-D-hexosaminides.. The sequence is that of Beta-N-acetylhexosaminidase (strH) from Streptococcus pneumoniae serotype 4 (strain ATCC BAA-334 / TIGR4).